Reading from the N-terminus, the 130-residue chain is Histone H2A.6 (130 aa).

Gly residues predominate over residues 1 to 12 (MAGRGKTLGSGG). The disordered stretch occupies residues 1–23 (MAGRGKTLGSGGAKKATSRSSKA).

The protein belongs to the histone H2A family. As to quaternary structure, the nucleosome is a histone octamer containing two molecules each of H2A, H2B, H3 and H4 assembled in one H3-H4 heterotetramer and two H2A-H2B heterodimers. The octamer wraps approximately 147 bp of DNA. Interacts with VIP1. Not ubiquitinated. Low level of expression, mainly in dividing tissues: floral buds, margins of newly emerging leaves, expanding leaves and the meristematic zone of root tips. Also expressed in many non-dividing cells of the elongation zone of the root.

Its subcellular location is the nucleus. The protein localises to the chromosome. In terms of biological role, core component of nucleosome. Nucleosomes wrap and compact DNA into chromatin, limiting DNA accessibility to the cellular machineries which require DNA as a template. Histones thereby play a central role in transcription regulation, DNA repair, DNA replication and chromosomal stability. DNA accessibility is regulated via a complex set of post-translational modifications of histones, also called histone code, and nucleosome remodeling. Required for the T-DNA integration step of plant transformation by Agrobacterium. May play an important role in illegitimate recombination. This chain is Histone H2A.6 (RAT5), found in Arabidopsis thaliana (Mouse-ear cress).